A 201-amino-acid chain; its full sequence is HTH-type transcriptional regulator Hpr (201 aa).

In terms of domain architecture, HTH marR-type spans 13-157; the sequence is AMLFSQRIAQ…MMCIIRNIYG (145 aa). A DNA-binding region (H-T-H motif) is located at residues 63–86; that stretch reads ISEIAKFGVMHVSTAFNFSKKLEE.

Homodimer.

Its function is as follows. Negative regulator of protease production and sporulation. The protein is HTH-type transcriptional regulator Hpr of Geobacillus sp. (strain WCH70).